A 282-amino-acid chain; its full sequence is RsbT co-antagonist protein RsbRC (282 aa).

2 positions are modified to phosphoserine: serine 165 and serine 174. One can recognise an STAS domain in the interval 165-276; the sequence is SAPVIVLFHS…STLASAIASD (112 aa). Phosphothreonine is present on threonine 186.

Probably present in the stressosome with RsbRA, RsbRB, RsbRD and RsbS. In terms of processing, phosphorylated by RsbT.

Its function is as follows. One of 4 functionally non-identical RsbR paralogs, it functions in the environmental signaling branch of the general stress response. In terms of biological role, negative regulator of sigma-B activity. Non-phosphorylated RsbS binds to RsbT, preventing its association with RsbU. Requires any one of RsbRA, RsbRB, RsbRC or RsbRD to sequester RsbT. When RsbS and the RsbR paralog(s) are phosphorylated, they release RsbT, which can then bind and activate RsbU. This Bacillus subtilis (strain 168) protein is RsbT co-antagonist protein RsbRC (rsbRC).